A 142-amino-acid chain; its full sequence is Transcription antitermination protein NusB (142 aa).

It belongs to the NusB family.

In terms of biological role, involved in transcription antitermination. Required for transcription of ribosomal RNA (rRNA) genes. Binds specifically to the boxA antiterminator sequence of the ribosomal RNA (rrn) operons. The sequence is that of Transcription antitermination protein NusB from Actinobacillus succinogenes (strain ATCC 55618 / DSM 22257 / CCUG 43843 / 130Z).